Consider the following 181-residue polypeptide: HGPRTase-like protein 1 (181 aa).

It belongs to the purine/pyrimidine phosphoribosyltransferase family. Archaeal HPRT subfamily.

Functionally, may catalyze a purine salvage reaction, the substrate is unknown. The chain is HGPRTase-like protein 1 from Halalkalicoccus jeotgali (strain DSM 18796 / CECT 7217 / JCM 14584 / KCTC 4019 / B3).